The sequence spans 181 residues: MLPMSVHPATTPALASRPRVSLPRPSTPSSSSSLVHLKSRRPPLRSLRSLTAAAAAAAVEAGEPYFGLGDDEPLGGEGDAEAVVESEEYKVEVPEKQDPMLVLKFIWMEKNIGIALDQMVPGVGSIPLSPYYFWPRKDAWEELRAKLEEKEWISQKQMIILLNQATDIINLWQQGGGSLST.

The disordered stretch occupies residues 1-40; that stretch reads MLPMSVHPATTPALASRPRVSLPRPSTPSSSSSLVHLKSR. Residues 14-36 show a composition bias toward low complexity; that stretch reads LASRPRVSLPRPSTPSSSSSLVH.

The protein belongs to the chloroplast-specific ribosomal protein cS23 family. In terms of assembly, part of the 30S ribosomal subunit.

The protein resides in the plastid. Its subcellular location is the chloroplast. Its function is as follows. Component of the chloroplast ribosome (chloro-ribosome), a dedicated translation machinery responsible for the synthesis of chloroplast genome-encoded proteins, including proteins of the transcription and translation machinery and components of the photosynthetic apparatus. This Hordeum vulgare (Barley) protein is Small ribosomal subunit protein cS23 (PSRP3).